The sequence spans 312 residues: Uracil-DNA glycosylase (312 aa).

A compositionally biased stretch (basic and acidic residues) spans 1–11 (MSSACDHETEA). Residues 1–61 (MSSACDHETE…PPKRRRPCGL (61 aa)) are disordered. Positions 22–33 (EENGSNSSTPTS) are enriched in polar residues. Aspartate 155 acts as the Proton acceptor in catalysis.

It belongs to the uracil-DNA glycosylase (UDG) superfamily. UNG family.

Its subcellular location is the host nucleus. It catalyses the reaction Hydrolyzes single-stranded DNA or mismatched double-stranded DNA and polynucleotides, releasing free uracil.. Excises uracil residues from the DNA which can arise as a result of misincorporation of dUMP residues by DNA polymerase or deamination of cytosines. Therefore may reduce deleterious uracil incorporation into the viral genome, particularly in terminally differentiated cells which lack DNA repair enzymes. The chain is Uracil-DNA glycosylase (61) from Equine herpesvirus 1 (strain V592) (EHV-1).